The sequence spans 326 residues: ATP phosphoribosyltransferase regulatory subunit (326 aa).

The protein belongs to the class-II aminoacyl-tRNA synthetase family. HisZ subfamily. As to quaternary structure, heteromultimer composed of HisG and HisZ subunits.

Its subcellular location is the cytoplasm. It functions in the pathway amino-acid biosynthesis; L-histidine biosynthesis; L-histidine from 5-phospho-alpha-D-ribose 1-diphosphate: step 1/9. Required for the first step of histidine biosynthesis. May allow the feedback regulation of ATP phosphoribosyltransferase activity by histidine. The protein is ATP phosphoribosyltransferase regulatory subunit of Streptococcus thermophilus (strain ATCC BAA-491 / LMD-9).